A 274-amino-acid chain; its full sequence is S-adenosylmethionine-dependent nucleotide dehydratase (274 aa).

The Radical SAM core domain occupies 1 to 215 (MAYKVNLHIT…VERHAEVSHD (215 aa)). [4Fe-4S] cluster contacts are provided by Cys13, Cys17, and Cys20.

This sequence belongs to the radical SAM superfamily. Prokaryotic viperin family. The cofactor is [4Fe-4S] cluster.

It catalyses the reaction CTP + AH2 + S-adenosyl-L-methionine = 3'-deoxy-3',4'-didehydro-CTP + 5'-deoxyadenosine + L-methionine + A + H2O + H(+). Expression of pVip6 in E.coli (strain MG1655) confers resistance to phages lambda, P1, SECphi6, SECphi8 and T7. Catalyzes the conversion of cytidine triphosphate (CTP) to 3'-deoxy-3',4'-didehydro-CTP (ddhCTP), probably via a SAM-dependent radical mechanism. The modified nucleotide represses transcription from T7 RNA polymerase-directed genes (possibly by acting as chain terminators), strongly suggesting these nucleotides block viral polymerase transcription. The protein is S-adenosylmethionine-dependent nucleotide dehydratase of Selenomonas ruminantium.